The primary structure comprises 124 residues: Tax1-binding protein 3 homolog (124 aa).

A PDZ domain is found at 18-106 (AVELHKQEVI…DRAVKFIKQS (89 aa)).

Functionally, may regulate a number of protein-protein interactions by competing for PDZ domain binding sites. The chain is Tax1-binding protein 3 homolog from Caenorhabditis elegans.